Reading from the N-terminus, the 597-residue chain is Bile salt-activated lipase (597 aa).

A signal peptide spans 1–18 (LGASRLGPSPGCLAVASA). Residues C82 and C98 are joined by a disulfide bond. N205 carries an N-linked (GlcNAc...) asparagine glycan. S212 functions as the Acyl-ester intermediate in the catalytic mechanism. A disulfide bridge connects residues C264 and C275. Residue D338 is the Charge relay system of the active site. N-linked (GlcNAc...) asparagine glycosylation occurs at N379. H453 serves as the catalytic Charge relay system. The interval 553-591 (AGASLLPPEDNSQASPVPPADNSGAPTEPSAGDSEVAQM) is disordered.

The protein belongs to the type-B carboxylesterase/lipase family. Interacts with CLC.

The protein resides in the secreted. The catalysed reaction is a triacylglycerol + H2O = a diacylglycerol + a fatty acid + H(+). The enzyme catalyses 1,2,3-tri-(9Z-octadecenoyl)-glycerol + H2O = di-(9Z)-octadecenoylglycerol + (9Z)-octadecenoate + H(+). It carries out the reaction 1,2,3-trioctanoylglycerol + H2O = dioctanoylglycerol + octanoate + H(+). It catalyses the reaction a sterol ester + H2O = a sterol + a fatty acid + H(+). The catalysed reaction is cholesteryl (9Z-octadecenoate) + H2O = cholesterol + (9Z)-octadecenoate + H(+). The enzyme catalyses an acetyl ester + H2O = an aliphatic alcohol + acetate + H(+). It carries out the reaction a butanoate ester + H2O = an aliphatic alcohol + butanoate + H(+). It catalyses the reaction 9-hexadecanoyloxy-octadecanoate + H2O = 9-hydroxy-octadecanoate + hexadecanoate + H(+). The catalysed reaction is 9-(9Z-octadecenoyloxy)-octadecanoate + H2O = 9-hydroxy-octadecanoate + (9Z)-octadecenoate + H(+). The enzyme catalyses 1-hexadecanoyl-sn-glycero-3-phosphocholine + H2O = sn-glycerol 3-phosphocholine + hexadecanoate + H(+). It carries out the reaction 12-hexadecanoyloxy-octadecanoate + H2O = 12-hydroxyoctadecanoate + hexadecanoate + H(+). It catalyses the reaction 12-(9Z-octadecenoyloxy)-octadecanoate + H2O = 12-hydroxyoctadecanoate + (9Z)-octadecenoate + H(+). The catalysed reaction is 13-(9Z-octadecenoyloxy)-octadecanoate + H2O = 13-hydroxy-octadecanoate + (9Z)-octadecenoate + H(+). The enzyme catalyses 9-(9Z-hexadecenoyloxy)-octadecanoate + H2O = (9Z)-hexadecenoate + 9-hydroxy-octadecanoate + H(+). It carries out the reaction 12-(9Z-hexadecenoyloxy)-octadecanoate + H2O = 12-hydroxyoctadecanoate + (9Z)-hexadecenoate + H(+). It catalyses the reaction 13-(9Z-hexadecenoyloxy)-octadecanoate + H2O = 13-hydroxy-octadecanoate + (9Z)-hexadecenoate + H(+). The catalysed reaction is 12-octadecanoyloxy-octadecanoate + H2O = 12-hydroxyoctadecanoate + octadecanoate + H(+). The enzyme catalyses 13-octadecanoyloxy-octadecanoate + H2O = 13-hydroxy-octadecanoate + octadecanoate + H(+). It carries out the reaction 5-(9Z-hexadecenoyloxy)-octadecanoate + H2O = 5-hydroxy-octadecanoate + (9Z)-hexadecenoate + H(+). It catalyses the reaction 9-octadecanoyloxy-octadecanoate + H2O = 9-hydroxy-octadecanoate + octadecanoate + H(+). Its activity is regulated as follows. Activated by bile salts such as sodium taurocholate. In terms of biological role, catalyzes the hydrolysis of a wide range of substrates including cholesteryl esters, phospholipids, lysophospholipids, di- and tri-acylglycerols, and fatty acid esters of hydroxy fatty acids (FAHFA). Preferentially hydrolyzes FAHFAs with the ester bond further away from the carboxylate. Unsaturated FAHFAs are hydrolyzed more quickly than saturated FAHFAs. Has an essential role in the complete digestion of dietary lipids and their intestinal absorption, along with the absorption of fat-soluble vitamins. This chain is Bile salt-activated lipase (CEL), found in Bos taurus (Bovine).